Consider the following 116-residue polypeptide: Regulator of ribonuclease activity B (116 aa).

Belongs to the RraB family. In terms of assembly, interacts with the C-terminal region of Rne.

It localises to the cytoplasm. Functionally, globally modulates RNA abundance by binding to RNase E (Rne) and regulating its endonucleolytic activity. Can modulate Rne action in a substrate-dependent manner by altering the composition of the degradosome. The protein is Regulator of ribonuclease activity B of Colwellia psychrerythraea (strain 34H / ATCC BAA-681) (Vibrio psychroerythus).